Reading from the N-terminus, the 76-residue chain is Exodeoxyribonuclease 7 small subunit (76 aa).

Belongs to the XseB family. As to quaternary structure, heterooligomer composed of large and small subunits.

Its subcellular location is the cytoplasm. It catalyses the reaction Exonucleolytic cleavage in either 5'- to 3'- or 3'- to 5'-direction to yield nucleoside 5'-phosphates.. Functionally, bidirectionally degrades single-stranded DNA into large acid-insoluble oligonucleotides, which are then degraded further into small acid-soluble oligonucleotides. The protein is Exodeoxyribonuclease 7 small subunit of Legionella pneumophila (strain Paris).